Consider the following 356-residue polypeptide: Tungsten-containing aldehyde ferredoxin oxidoreductase cofactor-modifying protein (356 aa).

The 214-residue stretch at 1–214 folds into the Radical SAM core domain; it reads MKYLYLEITS…PIVNELYKIA (214 aa). Cysteine 12, cysteine 16, and cysteine 19 together coordinate [4Fe-4S] cluster.

Belongs to the radical SAM superfamily. It depends on [4Fe-4S] cluster as a cofactor.

Functionally, involved in the biosynthesis of a molybdopterin-based tungsten cofactor. The protein is Tungsten-containing aldehyde ferredoxin oxidoreductase cofactor-modifying protein (cmo) of Pyrococcus furiosus (strain ATCC 43587 / DSM 3638 / JCM 8422 / Vc1).